We begin with the raw amino-acid sequence, 276 residues long: NADPH-dependent 7-cyano-7-deazaguanine reductase (276 aa).

83–85 (IES) is a substrate binding site. Residue 85 to 86 (SK) participates in NADPH binding. Cysteine 184 serves as the catalytic Thioimide intermediate. The active-site Proton donor is aspartate 191. 223–224 (HE) contacts substrate. Position 252–253 (252–253 (RG)) interacts with NADPH.

It belongs to the GTP cyclohydrolase I family. QueF type 2 subfamily. Homodimer.

The protein localises to the cytoplasm. The catalysed reaction is 7-aminomethyl-7-carbaguanine + 2 NADP(+) = 7-cyano-7-deazaguanine + 2 NADPH + 3 H(+). The protein operates within tRNA modification; tRNA-queuosine biosynthesis. Its function is as follows. Catalyzes the NADPH-dependent reduction of 7-cyano-7-deazaguanine (preQ0) to 7-aminomethyl-7-deazaguanine (preQ1). The chain is NADPH-dependent 7-cyano-7-deazaguanine reductase from Pseudomonas fluorescens (strain SBW25).